Here is a 632-residue protein sequence, read N- to C-terminus: tRNA uridine 5-carboxymethylaminomethyl modification enzyme MnmG (632 aa).

FAD-binding positions include 13 to 18 (GGGHAG), valine 125, and serine 180. 273–287 (GPRYCPSIEDKVMRF) contributes to the NAD(+) binding site. Glutamine 370 contributes to the FAD binding site.

It belongs to the MnmG family. Homodimer. Heterotetramer of two MnmE and two MnmG subunits. FAD serves as cofactor.

Its subcellular location is the cytoplasm. In terms of biological role, NAD-binding protein involved in the addition of a carboxymethylaminomethyl (cmnm) group at the wobble position (U34) of certain tRNAs, forming tRNA-cmnm(5)s(2)U34. The sequence is that of tRNA uridine 5-carboxymethylaminomethyl modification enzyme MnmG from Vibrio vulnificus (strain CMCP6).